A 126-amino-acid polypeptide reads, in one-letter code: Histone H2B type 1-P (126 aa).

A disordered region spans residues 1-36 (MPEPVKSVPAPKKGSKKAVTKAQKKDGKKRKRSRKE). Proline 2 bears the N-acetylproline mark. At glutamate 3 the chain carries ADP-ribosyl glutamic acid. N6-(2-hydroxyisobutyryl)lysine; alternate is present on lysine 6. Lysine 6 bears the N6-(beta-hydroxybutyryl)lysine; alternate mark. Lysine 6 is modified (N6-acetyllysine; alternate). At lysine 6 the chain carries N6-butyryllysine; alternate. Position 6 is an N6-crotonyllysine; alternate (lysine 6). N6-lactoyllysine; alternate is present on lysine 6. Lysine 6 participates in a covalent cross-link: Glycyl lysine isopeptide (Lys-Gly) (interchain with G-Cter in SUMO2); alternate. Serine 7 bears the ADP-ribosylserine mark. Lysine 12 carries the N6-(beta-hydroxybutyryl)lysine; alternate modification. An N6-acetyllysine; alternate mark is found at lysine 12 and lysine 13. 2 positions are modified to N6-crotonyllysine; alternate: lysine 12 and lysine 13. Lysine 12 carries the N6-lactoyllysine; alternate modification. The residue at position 13 (lysine 13) is an N6-(2-hydroxyisobutyryl)lysine; alternate. Serine 15 is subject to Phosphoserine; by STK4/MST1. N6-acetyllysine; alternate occurs at positions 16, 17, 21, and 24. N6-crotonyllysine; alternate is present on residues lysine 16, lysine 17, lysine 21, and lysine 24. N6-lactoyllysine; alternate is present on residues lysine 16, lysine 17, lysine 21, and lysine 24. Position 17 is an N6-glutaryllysine; alternate (lysine 17). N6-(2-hydroxyisobutyryl)lysine; alternate occurs at positions 21 and 24. Lysine 21 bears the N6-(beta-hydroxybutyryl)lysine; alternate mark. Lysine 21 bears the N6-butyryllysine; alternate mark. Residue lysine 21 forms a Glycyl lysine isopeptide (Lys-Gly) (interchain with G-Cter in SUMO2); alternate linkage. Lysine 25 is subject to N6-(2-hydroxyisobutyryl)lysine. At lysine 35 the chain carries N6-(2-hydroxyisobutyryl)lysine; alternate. At lysine 35 the chain carries N6-(beta-hydroxybutyryl)lysine; alternate. At lysine 35 the chain carries N6-crotonyllysine; alternate. Position 35 is an N6-glutaryllysine; alternate (lysine 35). Position 35 is an N6-succinyllysine; alternate (lysine 35). Residue lysine 35 forms a Glycyl lysine isopeptide (Lys-Gly) (interchain with G-Cter in ubiquitin); alternate linkage. Glutamate 36 bears the PolyADP-ribosyl glutamic acid mark. A Phosphoserine; by AMPK modification is found at serine 37. N6-(2-hydroxyisobutyryl)lysine; alternate is present on residues lysine 44, lysine 47, and lysine 58. An N6-lactoyllysine; alternate modification is found at lysine 44. Lysine 44 and lysine 47 each carry N6-glutaryllysine; alternate. Position 47 is an N6-methyllysine; alternate (lysine 47). The residue at position 58 (lysine 58) is an N6,N6-dimethyllysine; alternate. A Dimethylated arginine modification is found at arginine 80. Lysine 86 carries the N6-(2-hydroxyisobutyryl)lysine; alternate modification. Lysine 86 is subject to N6-acetyllysine; alternate. At lysine 86 the chain carries N6-lactoyllysine; alternate. Residue lysine 86 is modified to N6,N6,N6-trimethyllysine; alternate. Omega-N-methylarginine is present on residues arginine 87 and arginine 93. Lysine 109 bears the N6-(2-hydroxyisobutyryl)lysine; alternate mark. At lysine 109 the chain carries N6-(beta-hydroxybutyryl)lysine; alternate. Lysine 109 bears the N6-lactoyllysine; alternate mark. Lysine 109 is subject to N6-glutaryllysine; alternate. Lysine 109 is modified (N6-methyllysine; alternate). Serine 113 is a glycosylation site (O-linked (GlcNAc) serine). The residue at position 116 (threonine 116) is a Phosphothreonine. Residues lysine 117 and lysine 121 each carry the N6-(2-hydroxyisobutyryl)lysine; alternate modification. Lysine 117 carries the post-translational modification N6-(beta-hydroxybutyryl)lysine; alternate. Lysine 117 and lysine 121 each carry N6-lactoyllysine; alternate. Lysine 117 and lysine 121 each carry N6-glutaryllysine; alternate. Residues lysine 117 and lysine 121 each carry the N6-succinyllysine; alternate modification. Lysine 117 carries the N6-methylated lysine; alternate modification. Lysine 121 is covalently cross-linked (Glycyl lysine isopeptide (Lys-Gly) (interchain with G-Cter in ubiquitin); alternate).

This sequence belongs to the histone H2B family. As to quaternary structure, the nucleosome is a histone octamer containing two molecules each of H2A, H2B, H3 and H4 assembled in one H3-H4 heterotetramer and two H2A-H2B heterodimers. The octamer wraps approximately 147 bp of DNA. Post-translationally, monoubiquitination at Lys-35 (H2BK34Ub) by the MSL1/MSL2 dimer is required for histone H3 'Lys-4' (H3K4me) and 'Lys-79' (H3K79me) methylation and transcription activation at specific gene loci, such as HOXA9 and MEIS1 loci. Similarly, monoubiquitination at Lys-121 (H2BK120Ub) by the RNF20/40 complex gives a specific tag for epigenetic transcriptional activation and is also prerequisite for histone H3 'Lys-4' and 'Lys-79' methylation. It also functions cooperatively with the FACT dimer to stimulate elongation by RNA polymerase II. H2BK120Ub also acts as a regulator of mRNA splicing: deubiquitination by USP49 is required for efficient cotranscriptional splicing of a large set of exons. Phosphorylated on Ser-15 (H2BS14ph) by STK4/MST1 during apoptosis; which facilitates apoptotic chromatin condensation. Also phosphorylated on Ser-15 in response to DNA double strand breaks (DSBs), and in correlation with somatic hypermutation and immunoglobulin class-switch recombination. Phosphorylation at Ser-37 (H2BS36ph) by AMPK in response to stress promotes transcription. In terms of processing, glcNAcylation at Ser-113 promotes monoubiquitination of Lys-121. It fluctuates in response to extracellular glucose, and associates with transcribed genes. Post-translationally, ADP-ribosylated by PARP1 or PARP2 on Ser-7 (H2BS6ADPr) in response to DNA damage. H2BS6ADPr promotes recruitment of CHD1L. Mono-ADP-ribosylated on Glu-3 (H2BE2ADPr) by PARP3 in response to single-strand breaks. Poly ADP-ribosylation on Glu-36 (H2BE35ADPr) by PARP1 regulates adipogenesis: it inhibits phosphorylation at Ser-37 (H2BS36ph), thereby blocking expression of pro-adipogenetic genes. Crotonylation (Kcr) is specifically present in male germ cells and marks testis-specific genes in post-meiotic cells, including X-linked genes that escape sex chromosome inactivation in haploid cells. Crotonylation marks active promoters and enhancers and confers resistance to transcriptional repressors. It is also associated with post-meiotically activated genes on autosomes. In terms of processing, hydroxybutyrylation of histones is induced by starvation. Post-translationally, lactylated in macrophages by EP300/P300 by using lactoyl-CoA directly derived from endogenous or exogenous lactate, leading to stimulates gene transcription.

It is found in the nucleus. It localises to the chromosome. Its function is as follows. Core component of nucleosome. Nucleosomes wrap and compact DNA into chromatin, limiting DNA accessibility to the cellular machineries which require DNA as a template. Histones thereby play a central role in transcription regulation, DNA repair, DNA replication and chromosomal stability. DNA accessibility is regulated via a complex set of post-translational modifications of histones, also called histone code, and nucleosome remodeling. The sequence is that of Histone H2B type 1-P (Hist1h2bp) from Mus musculus (Mouse).